A 726-amino-acid polypeptide reads, in one-letter code: MDTFITRNFQTTIIQKAKNTMAEFSEDPELQPAMLFNICVHLEVCYVISDMNFLDEEGKSYTALEGQGKEQNLRPQYEVIEGMPRTIAWMVQRSLAQEHGIETPKYLADLFDYKTKRFIEVGITKGLADDYFWKKKEKLGNSMELMIFSYNQDYSLSNESSLDEEGKGRVLSRLTELQAELSLKNLWQVLIGEEDVEKGIDFKLGQTISRLRDISVPAGFSNFEGMRSYIDNIDPKGAIERNLARMSPLVSATPKKLKWEDLRPIGPHIYNHELPEVPYNAFLLMSDELGLANMTEGKSKKPKTLAKECLEKYSTLRDQTDPILIMKSEKANENFLWKLWRDCVNTISNEEMSNELQKTNYAKWATGDGLTYQKIMKEVAIDDETMCQEEPKIPNKCRVAAWVQTEMNLLSTLTSKRALDLPEIGPDVAPVEHVGSERRKYFVNEINYCKASTVMMKYVLFHTSLLNESNASMGKYKVIPITNRVVNEKGESFDMLYGLAVKGQSHLRGDTDVVTVVTFEFSSTDPRVDSGKWPKYTVFRIGSLFVSGREKSVYLYCRVNGTNKIQMKWGMEARRCLLQSMQQMEAIVEQESSIQGYDMTKACFKGDRVNSPKTFSIGTQEGKLVKGSFGKALRVIFTKCLMHYVFGNAQLEGFSAESRRLLLLIQALKDRKGPWVFDLEGMYSGIEECISNNPWVIQSAYWFNEWLGFEKEGSKVLESVDEIMDE.

Residues His41, Glu81, Asp109, Glu120, and Val121 each contribute to the Mn(2+) site. The short motif at 125 to 140 (KGLADDYFWKKKEKLG) is the Nuclear localization signal 1 (NLS1) element. Residues 183–244 (LKNLWQVLIG…PKGAIERNLA (62 aa)) carry the Nuclear localization signal 2 (NLS2) motif.

The protein belongs to the influenza viruses PA family. Influenza RNA polymerase is composed of three subunits: PB1, PB2 and PA. Interacts (via C-terminus) with PB1 (via N-terminus). Mn(2+) is required as a cofactor. Phosphorylated on serines and threonines by host kinases, including human casein kinase II.

It is found in the host cytoplasm. It localises to the host nucleus. Its function is as follows. Plays an essential role in viral RNA transcription and replication by forming the heterotrimeric polymerase complex together with PB1 and PB2 subunits. The complex transcribes viral mRNAs by using a unique mechanism called cap-snatching. It consists in the hijacking and cleavage of host capped pre-mRNAs. These short capped RNAs are then used as primers for viral mRNAs. The PB2 subunit is responsible for the binding of the 5' cap of cellular pre-mRNAs which are subsequently cleaved after 10-13 nucleotides by the PA subunit that carries the endonuclease activity. This Influenza B virus (strain B/Panama/45/1990) protein is Polymerase acidic protein.